Reading from the N-terminus, the 288-residue chain is Phenazine biosynthesis-like domain-containing protein 2 (288 aa).

Residue E46 is part of the active site.

The protein belongs to the PhzF family.

This Mus musculus (Mouse) protein is Phenazine biosynthesis-like domain-containing protein 2 (Pbld2).